We begin with the raw amino-acid sequence, 674 residues long: Polyunsaturated fatty acid 5-lipoxygenase (674 aa).

One can recognise a PLAT domain in the interval 2 to 118; that stretch reads PSYTVTVATG…EVVLRDGRAK (117 aa). Positions 17, 18, 19, 44, 45, 47, 79, and 80 each coordinate Ca(2+). The Lipoxygenase domain occupies 119-674; that stretch reads LARDDQIHIL…PDRIPNSVAI (556 aa). Ser-272 bears the Phosphoserine; by MAPKAPK2 mark. His-368 and His-373 together coordinate Fe cation. Ser-524 carries the phosphoserine; by PKA modification. Fe cation contacts are provided by His-551, Asn-555, and Ile-674.

Belongs to the lipoxygenase family. In terms of assembly, homodimer. Interacts with ALOX5AP and LTC4S. Interacts with COTL1, the interaction is required for stability and efficient catalytic activity. Interacts with PIK3R1; this interaction bridges ALOX5 with CD40 after CD40 ligation in B cells and leads to the production of reactive oxygen species (ROS). Interacts (via PLAT domain) with DICER1 (via Dicer dsRNA-binding fold domain); this interaction enhances arachidonate 5-lipoxygenase activity and modifies the miRNA precursor processing activity of DICER1. Requires Fe cation as cofactor. In terms of processing, serine phosphorylation by MAPKAPK2 is stimulated by arachidonic acid. Phosphorylation on Ser-524 by PKA has an inhibitory effect. Phosphorylation on Ser-272 prevents export from the nucleus. Phosphorylation at Ser-524 is stimulated by 8-bromo-3',5'-cyclic AMP or prostaglandin E2.

It is found in the cytoplasm. The protein localises to the nucleus matrix. It localises to the nucleus membrane. Its subcellular location is the perinuclear region. The protein resides in the cytosol. It is found in the nucleus envelope. The protein localises to the nucleus intermembrane space. It carries out the reaction (5Z,8Z,11Z,14Z)-eicosatetraenoate + O2 = leukotriene A4 + H2O. The enzyme catalyses 18-HEPE + O2 = (5S)-hydroperoxy-18-hydroxy-(7E,9E,11Z,14Z,16E)-eicosapentaenoate. It catalyses the reaction (18R)-hydroxy-(5Z,8Z,11Z,14Z,16E)-eicosapentaenoate + O2 = (5S)-hydroperoxy-(18R)-hydroxy-(6E,8Z,11Z,14Z,16E)-eicosapentaenoate. The catalysed reaction is (18S)-hydroxy-(5Z,8Z,11Z,14Z,16E)-eicosapentaenoate + O2 = (5S)-hydroperoxy-(18S)-hydroxy-(6E,8Z,11Z,14Z,16E)-eicosapentaenoate. It carries out the reaction (5S)-hydroperoxy-(18S)-hydroxy-(6E,8Z,11Z,14Z,16E)-eicosapentaenoate = (5S,6S)-epoxy-(18S)-hydroxy-(7E,9E,11Z,14Z,16E)-eicosapentaenoate + H2O. The enzyme catalyses (5S)-hydroperoxy-(18R)-hydroxy-(6E,8Z,11Z,14Z,16E)-eicosapentaenoate = (5S,6S)-epoxy-(18R)-hydroxy-(7E,9E,11Z,14Z,16E)-eicosapentaenoate + H2O. It catalyses the reaction (5S)-hydroperoxy-18-hydroxy-(7E,9E,11Z,14Z,16E)-eicosapentaenoate = (5S,6S)-epoxy-18-hydroxy-(7E,9E,11Z,14Z,16E)-eicosapentaenoate + H2O. The catalysed reaction is (5Z,8Z,11Z,14Z)-eicosatetraenoate + O2 = (5S)-hydroperoxy-(6E,8Z,11Z,14Z)-eicosatetraenoate. It carries out the reaction (15S)-hydroxy-(5Z,8Z,11Z,13E)-eicosatetraenoate + O2 = (5S)-hydroperoxy-(15S)-hydroxy-(6E,8Z,11Z,13E)-eicosatetraenoate. The enzyme catalyses (5S)-hydroperoxy-(6E,8Z,11Z,14Z)-eicosatetraenoate = leukotriene A4 + H2O. It catalyses the reaction (5Z,8Z,11Z,14Z)-eicosatetraenoate + O2 = (8S)-hydroperoxy-(5Z,9E,11Z,14Z)-eicosatetraenoate. The catalysed reaction is (5Z,8Z,11Z,14Z)-eicosatetraenoate + O2 = (12S)-hydroperoxy-(5Z,8Z,10E,14Z)-eicosatetraenoate. It carries out the reaction (5Z,8Z)-eicosadienoate + O2 = (5S)-hydroperoxy-(6E,8Z)-eicosadienoate. The enzyme catalyses (12S)-hydroxy-(5Z,8Z,10E,14Z)-eicosatetraenoate + O2 = (5S)-hydroperoxy-(12S)-hydroxy-(6E,8Z,10E,14Z)-eicosatetraenoate. It catalyses the reaction (5Z,8Z,11Z,14Z,17Z)-eicosapentaenoate + O2 = 5-hydroperoxy-(6E,8Z,11Z,14Z,17Z)-eicosapentaenoate. The catalysed reaction is (4Z,7Z,10Z,13Z,16Z,19Z)-docosahexaenoate + O2 = (14S)-hydroperoxy-(4Z,7Z,10Z,12E,16Z,19Z)-docosahexaenoate. It carries out the reaction (4Z,7Z,10Z,13Z,16Z,19Z)-docosahexaenoate + O2 = (7S)-hydroperoxy-(4Z,8E,10Z,13Z,16Z,19Z)-docosahexaenoate. The enzyme catalyses (4Z,7Z,10Z,13Z,16Z,19Z)-docosahexaenoate + O2 = (17S)-hydroperoxy-(4Z,7Z,10Z,13Z,15E,19Z)-docosahexaenoate. It participates in lipid metabolism; leukotriene A4 biosynthesis. Its activity is regulated as follows. Undergoes a sequential loss of the oxygenase and pseudoperoxidase activities which is dependent on the structural characteristics of the substrate for the reaction, on oxygen concentration and on exposure to phospholipids and calcium. 15-HETE and other 15-mono-hydroxyeicosanoids exhibit the highest inhibitory potencies in their capability of suppressing 5-lipoxygenation of arachidonic acid, whereas the other HETEs, (5S,15S)-dihydroxy-(6E,8Z,11Z,13E)-eicosatetraenoic acid (5,15-diHETE) as well as octadecanoids, are modest or poor inhibitors. The formation of (5S)-hydroperoxy-(15S)-hydroxy-(6E,8Z,11Z,13E)-eicosatetraenoate is strongly stimulated by either hydroperoxypolyenoic fatty acids or arachidonic acid. Arachidonate 5-lipoxygenase and leukotriene A4 synthase activities are allosterically increased by ATP. Its function is as follows. Catalyzes the oxygenation of arachidonate ((5Z,8Z,11Z,14Z)-eicosatetraenoate) to 5-hydroperoxyeicosatetraenoate (5-HPETE) followed by the dehydration to 5,6- epoxyeicosatetraenoate (Leukotriene A4/LTA4), the first two steps in the biosynthesis of leukotrienes, which are potent mediators of inflammation. Also catalyzes the oxygenation of arachidonate into 8-hydroperoxyicosatetraenoate (8-HPETE) and 12-hydroperoxyicosatetraenoate (12-HPETE). Displays lipoxin synthase activity being able to convert (15S)-HETE into a conjugate tetraene. Although arachidonate is the preferred substrate, this enzyme can also metabolize oxidized fatty acids derived from arachidonate such as (15S)-HETE, eicosapentaenoate (EPA) such as (18R)- and (18S)-HEPE or docosahexaenoate (DHA) which lead to the formation of specialized pro-resolving mediators (SPM) lipoxin and resolvins E and D respectively, therefore it participates in anti-inflammatory responses. Oxidation of DHA directly inhibits endothelial cell proliferation and sprouting angiogenesis via peroxisome proliferator-activated receptor gamma (PPARgamma). It does not catalyze the oxygenation of linoleic acid and does not convert (5S)-HETE to lipoxin isomers. In addition to inflammatory processes, it participates in dendritic cell migration, wound healing through an antioxidant mechanism based on heme oxygenase-1 (HO-1) regulation expression, monocyte adhesion to the endothelium via ITGAM expression on monocytes. Moreover, it helps establish an adaptive humoral immunity by regulating primary resting B cells and follicular helper T cells and participates in the CD40-induced production of reactive oxygen species (ROS) after CD40 ligation in B cells through interaction with PIK3R1 that bridges ALOX5 with CD40. May also play a role in glucose homeostasis, regulation of insulin secretion and palmitic acid-induced insulin resistance via AMPK. Can regulate bone mineralization and fat cell differentiation increases in induced pluripotent stem cells. This is Polyunsaturated fatty acid 5-lipoxygenase from Homo sapiens (Human).